A 389-amino-acid polypeptide reads, in one-letter code: Succinate--CoA ligase [ADP-forming] subunit beta (389 aa).

An ATP-grasp domain is found at 9 to 244; that stretch reads KEILRKYNVP…LDEEDANEIE (236 aa). ATP-binding positions include lysine 46, 53-55, glutamate 99, alanine 102, and glutamate 107; that span reads GRG. Asparagine 199 and aspartate 213 together coordinate Mg(2+). Substrate is bound by residues asparagine 264 and 321-323; that span reads GIM.

It belongs to the succinate/malate CoA ligase beta subunit family. In terms of assembly, heterotetramer of two alpha and two beta subunits. Mg(2+) serves as cofactor.

The enzyme catalyses succinate + ATP + CoA = succinyl-CoA + ADP + phosphate. It carries out the reaction GTP + succinate + CoA = succinyl-CoA + GDP + phosphate. It participates in carbohydrate metabolism; tricarboxylic acid cycle; succinate from succinyl-CoA (ligase route): step 1/1. Its function is as follows. Succinyl-CoA synthetase functions in the citric acid cycle (TCA), coupling the hydrolysis of succinyl-CoA to the synthesis of either ATP or GTP and thus represents the only step of substrate-level phosphorylation in the TCA. The beta subunit provides nucleotide specificity of the enzyme and binds the substrate succinate, while the binding sites for coenzyme A and phosphate are found in the alpha subunit. In Cupriavidus pinatubonensis (strain JMP 134 / LMG 1197) (Cupriavidus necator (strain JMP 134)), this protein is Succinate--CoA ligase [ADP-forming] subunit beta.